The sequence spans 177 residues: 3-isopropylmalate dehydratase small subunit 1 (177 aa).

The tract at residues 157–177 is disordered; it reads GRFPGEEPGAEASTETASAAE. The segment covering 162 to 177 has biased composition (low complexity); it reads EEPGAEASTETASAAE.

Belongs to the LeuD family. LeuD type 2 subfamily. As to quaternary structure, heterodimer of LeuC and LeuD.

The enzyme catalyses (2R,3S)-3-isopropylmalate = (2S)-2-isopropylmalate. The protein operates within amino-acid biosynthesis; L-leucine biosynthesis; L-leucine from 3-methyl-2-oxobutanoate: step 2/4. Catalyzes the isomerization between 2-isopropylmalate and 3-isopropylmalate, via the formation of 2-isopropylmaleate. This chain is 3-isopropylmalate dehydratase small subunit 1 (leuD1), found in Deinococcus radiodurans (strain ATCC 13939 / DSM 20539 / JCM 16871 / CCUG 27074 / LMG 4051 / NBRC 15346 / NCIMB 9279 / VKM B-1422 / R1).